We begin with the raw amino-acid sequence, 131 residues long: Holo-[acyl-carrier-protein] synthase (131 aa).

Residues aspartate 8 and glutamate 59 each coordinate Mg(2+).

This sequence belongs to the P-Pant transferase superfamily. AcpS family. The cofactor is Mg(2+).

It is found in the cytoplasm. It carries out the reaction apo-[ACP] + CoA = holo-[ACP] + adenosine 3',5'-bisphosphate + H(+). Functionally, transfers the 4'-phosphopantetheine moiety from coenzyme A to a Ser of acyl-carrier-protein. The polypeptide is Holo-[acyl-carrier-protein] synthase (Rickettsia rickettsii (strain Iowa)).